The following is a 372-amino-acid chain: Rab9 effector protein with kelch motifs (372 aa).

5 Kelch repeats span residues 49-95, 100-146, 151-203, 204-250, and 254-303; these read KVFI…FIPS, SIWV…TSSA, QLYV…AAGT, KLFI…SAVA, and HLYV…IIPW. Residues 309-341 are disordered; that stretch reads SEKEDSNSATVNRDAEKGDSTEKGVTQGGDSQE. A compositionally biased stretch (basic and acidic residues) spans 321–330; sequence RDAEKGDSTE. The Kelch 6 repeat unit spans residues 349 to 372; sequence LCFVFGGMNTEGEIYDDCIVTAVD.

As to quaternary structure, interacts with PIKFYVE; the interaction recruits RABEPK to the endosomal membrane. Interacts with RAB9 in its GTP-bound conformation. Post-translationally, phosphorylated on Ser residues by PIKFYVE.

The protein localises to the cytoplasm. It is found in the endosome membrane. Functionally, rab9 effector required for endosome to trans-Golgi network (TGN) transport. This chain is Rab9 effector protein with kelch motifs (RABEPK), found in Bos taurus (Bovine).